We begin with the raw amino-acid sequence, 308 residues long: L-lactate dehydrogenase 2 (308 aa).

Residues Val13, Asp34, Arg39, Tyr64, and 78-79 (GV) contribute to the NAD(+) site. Residue Arg87 participates in substrate binding. Residue Thr100 participates in NAD(+) binding. 119–122 (NPVD) contacts substrate. Thr142 is a binding site for NAD(+). A substrate-binding site is contributed by 147–150 (DSMR). His174 (proton acceptor) is an active-site residue. Thr224 is a substrate binding site.

The protein belongs to the LDH/MDH superfamily. LDH family. As to quaternary structure, homotetramer.

The protein localises to the cytoplasm. The catalysed reaction is (S)-lactate + NAD(+) = pyruvate + NADH + H(+). Its pathway is fermentation; pyruvate fermentation to lactate; (S)-lactate from pyruvate: step 1/1. Functionally, catalyzes the conversion of lactate to pyruvate. The chain is L-lactate dehydrogenase 2 from Lactobacillus acidophilus (strain ATCC 700396 / NCK56 / N2 / NCFM).